The chain runs to 343 residues: GTP 3',8-cyclase (343 aa).

The region spanning 19-244 (PFGRNISYLR…TDLDDSTGGP (226 aa)) is the Radical SAM core domain. R28 contacts GTP. [4Fe-4S] cluster-binding residues include C35 and C39. Y41 lines the S-adenosyl-L-methionine pocket. C42 serves as a coordination point for [4Fe-4S] cluster. Position 77 (R77) interacts with GTP. Residue G81 participates in S-adenosyl-L-methionine binding. T111 lines the GTP pocket. An S-adenosyl-L-methionine-binding site is contributed by S135. Residue K171 coordinates GTP. An S-adenosyl-L-methionine-binding site is contributed by M205. Residues C268 and C271 each coordinate [4Fe-4S] cluster. Residue 273–275 (RVR) coordinates GTP. Position 285 (C285) interacts with [4Fe-4S] cluster.

This sequence belongs to the radical SAM superfamily. MoaA family. In terms of assembly, monomer and homodimer. The cofactor is [4Fe-4S] cluster.

The catalysed reaction is GTP + AH2 + S-adenosyl-L-methionine = (8S)-3',8-cyclo-7,8-dihydroguanosine 5'-triphosphate + 5'-deoxyadenosine + L-methionine + A + H(+). The protein operates within cofactor biosynthesis; molybdopterin biosynthesis. In terms of biological role, catalyzes the cyclization of GTP to (8S)-3',8-cyclo-7,8-dihydroguanosine 5'-triphosphate. This Nitrobacter winogradskyi (strain ATCC 25391 / DSM 10237 / CIP 104748 / NCIMB 11846 / Nb-255) protein is GTP 3',8-cyclase.